The sequence spans 139 residues: ATP synthase epsilon chain (139 aa).

The protein belongs to the ATPase epsilon chain family. F-type ATPases have 2 components, CF(1) - the catalytic core - and CF(0) - the membrane proton channel. CF(1) has five subunits: alpha(3), beta(3), gamma(1), delta(1), epsilon(1). CF(0) has three main subunits: a, b and c.

It localises to the cell inner membrane. Produces ATP from ADP in the presence of a proton gradient across the membrane. In Actinobacillus pleuropneumoniae serotype 7 (strain AP76), this protein is ATP synthase epsilon chain.